The following is a 472-amino-acid chain: Na(+)/H(+) antiporter NhaA (472 aa).

The next 10 membrane-spanning stretches (helical) occupy residues 24 to 44, 66 to 86, 108 to 128, 156 to 176, 196 to 216, 234 to 254, 290 to 310, 312 to 332, 361 to 381, and 392 to 412; these read ISGL…NLPA, LPIG…TVGL, LCAV…TALF, GWAV…ALFA, LLAI…YWFI, VPWI…FEAG, PFSA…VHFE, MSPL…LVVG, MIPA…IASL, and ARFG…VLLS. The disordered stretch occupies residues 422–472; the sequence is AAAAAADEEDDESIDGDGIGQPSHTTEPTTPTEHPGTLADGTASVEIDFRH. Acidic residues predominate over residues 427 to 436; that stretch reads ADEEDDESID. The segment covering 445-456 has biased composition (low complexity); that stretch reads HTTEPTTPTEHP.

It belongs to the NhaA Na(+)/H(+) (TC 2.A.33) antiporter family.

Its subcellular location is the cell membrane. The enzyme catalyses Na(+)(in) + 2 H(+)(out) = Na(+)(out) + 2 H(+)(in). Na(+)/H(+) antiporter that extrudes sodium in exchange for external protons. This chain is Na(+)/H(+) antiporter NhaA, found in Bifidobacterium longum (strain NCC 2705).